Here is a 666-residue protein sequence, read N- to C-terminus: Probable potassium transport system protein Kup (666 aa).

12 helical membrane passes run 16–36, 58–78, 100–120, 141–161, 165–185, 221–241, 253–273, 294–314, 343–363, 373–393, 399–419, and 424–444; these read GFIIALGIVYGDIGTSPLYTM, ISLIIWTLTLITTIKYVLIAL, PWLIIPAMIGGATLLSDGALT, IYQNQTNVIITTLVILIVLFG, FGTGFIGKIFGPVMFIWFSFL, IFILGSIFLATTGAEALYSDL, WPFVKVCIVLSYCGQAAWILA, VYLVSLATLAAIIASQALISG, LYIPVINWILFAVTSCTVLYF, YGLAITITMLMTTILLNYYLI, PFLAHLVMTFFALVEFIFFWA, and FMHGGYVVVILALAIVFVMFI.

This sequence belongs to the HAK/KUP transporter (TC 2.A.72) family.

The protein localises to the cell membrane. It carries out the reaction K(+)(in) + H(+)(in) = K(+)(out) + H(+)(out). Transport of potassium into the cell. Likely operates as a K(+):H(+) symporter. This Streptococcus pyogenes serotype M6 (strain ATCC BAA-946 / MGAS10394) protein is Probable potassium transport system protein Kup.